The primary structure comprises 503 residues: Lysine--tRNA ligase (503 aa).

Residues Glu-414 and Glu-421 each coordinate Mg(2+).

It belongs to the class-II aminoacyl-tRNA synthetase family. As to quaternary structure, homodimer. Mg(2+) is required as a cofactor.

Its subcellular location is the cytoplasm. The enzyme catalyses tRNA(Lys) + L-lysine + ATP = L-lysyl-tRNA(Lys) + AMP + diphosphate. This is Lysine--tRNA ligase from Laribacter hongkongensis (strain HLHK9).